A 187-amino-acid chain; its full sequence is MNETQIQRETRQVVEDVLEKTNLKQGALFVLGLSSSEVLGGQIGKESSQEIGELIVETILGILGSRGIHLAVQGCEHVNRALVVERQVAEQFGLEIVSVHPTLHAGGSGQLAAFKFMQDPVEVEFIKAHAGLDIGDTAIGMHVKHVQVPIRPILREIGHAHVTALTSRPKLIGGARAHYPQDAIRKF.

The protein belongs to the UPF0340 family.

This is UPF0340 protein SPD_0576 from Streptococcus pneumoniae serotype 2 (strain D39 / NCTC 7466).